Reading from the N-terminus, the 576-residue chain is RNA-binding post-transcriptional regulator cip2 (576 aa).

The RRM domain maps to 232–310 (TAIVIKNIPF…RRLRVEWKRQ (79 aa)). One can recognise an R3H domain in the interval 355–420 (DPAILNVYSH…AKQVVITMPS (66 aa)).

Interacts with csx1. Phosphorylated by sty1.

The protein localises to the cytoplasm. Regulates global gene expression after oxidative stress. Interacts and stabilizes mRNAs and may regulate their transition between different cytoplasmic components after oxidative stress. This Schizosaccharomyces pombe (strain 972 / ATCC 24843) (Fission yeast) protein is RNA-binding post-transcriptional regulator cip2 (cip2).